Here is a 447-residue protein sequence, read N- to C-terminus: Cobyrinate a,c-diamide synthase (447 aa).

The 189-residue stretch at 247-435 (RIGVAIDEAF…IHIHAASCPQ (189 aa)) folds into the GATase cobBQ-type domain. Residue Cys-329 is the Nucleophile of the active site.

The protein belongs to the CobB/CbiA family. Mg(2+) serves as cofactor.

The enzyme catalyses cob(II)yrinate + 2 L-glutamine + 2 ATP + 2 H2O = cob(II)yrinate a,c diamide + 2 L-glutamate + 2 ADP + 2 phosphate + 2 H(+). The catalysed reaction is Ni-sirohydrochlorin + 2 L-glutamine + 2 ATP + 2 H2O = Ni-sirohydrochlorin a,c-diamide + 2 L-glutamate + 2 ADP + 2 phosphate + 2 H(+). It participates in cofactor biosynthesis; adenosylcobalamin biosynthesis; cob(II)yrinate a,c-diamide from sirohydrochlorin (anaerobic route): step 10/10. Functionally, catalyzes the ATP-dependent amidation of the two carboxylate groups at positions a and c of cobyrinate, using either L-glutamine or ammonia as the nitrogen source. Involved in the biosynthesis of the unique nickel-containing tetrapyrrole coenzyme F430, the prosthetic group of methyl-coenzyme M reductase (MCR), which plays a key role in methanogenesis and anaerobic methane oxidation. Catalyzes the ATP-dependent amidation of the two carboxylate groups at positions a and c of Ni-sirohydrochlorin, using L-glutamine or ammonia as the nitrogen source. The polypeptide is Cobyrinate a,c-diamide synthase (Methanothermobacter thermautotrophicus (strain ATCC 29096 / DSM 1053 / JCM 10044 / NBRC 100330 / Delta H) (Methanobacterium thermoautotrophicum)).